The primary structure comprises 61 residues: Probradykinin-2 (61 aa).

Residues 1–22 form the signal peptide; the sequence is MSFLKKSLFLVLFLGLVSFSIC. The propeptide occupies 23–50; the sequence is EEEKRETEEEENEDEIEEQSEEKKRFEP. A disordered region spans residues 24–61; that stretch reads EEKRETEEEENEDEIEEQSEEKKRFEPVPPGFTPFRQT. Acidic residues predominate over residues 30–42; that stretch reads EEEENEDEIEEQS. Position 52 is a 4-hydroxyproline (P52).

Belongs to the frog skin active peptide (FSAP) family. Bradykinin-related peptide subfamily. As to expression, expressed by the skin glands.

It localises to the secreted. May produce in vitro relaxation of rat arterial smooth muscle and constriction of intestinal smooth muscle. May target bradykinin receptors (BDKRB). The protein is Probradykinin-2 of Pithecopus azureus (Orange-legged monkey tree frog).